Here is a 242-residue protein sequence, read N- to C-terminus: Alpha-aspartyl dipeptidase (242 aa).

Catalysis depends on charge relay system residues Ser-125, Asp-140, and His-162.

The protein belongs to the peptidase S51 family.

Its subcellular location is the cytoplasm. The catalysed reaction is Dipeptidase E catalyzes the hydrolysis of dipeptides Asp-|-Xaa. It does not act on peptides with N-terminal Glu, Asn or Gln, nor does it cleave isoaspartyl peptides.. Its function is as follows. Hydrolyzes dipeptides containing N-terminal aspartate residues. This Xenopus laevis (African clawed frog) protein is Alpha-aspartyl dipeptidase (aad-a).